Consider the following 285-residue polypeptide: Baculoviral IAP repeat-containing protein 7 (285 aa).

Residues 18–47 form a disordered region; sequence ESRARDSVRGPELSHREDGSGRTQEQDKPH. Residues 19–47 are compositionally biased toward basic and acidic residues; it reads SRARDSVRGPELSHREDGSGRTQEQDKPH. One copy of the BIR repeat lies at 96 to 161; the sequence is RLASFYDWPS…RWFPRCQFLL (66 aa). Cys130, Cys133, His150, and Cys157 together coordinate Zn(2+). A disordered region spans residues 184-225; sequence QREEPEDAVSATPSAPAHGSPELLRSRRETQPEDVSEPGAKD. An RING-type zinc finger spans residues 239-273; the sequence is CKVCLDRAVSIVFVPCGHFVCTECAPNLQLCPICR.

It belongs to the IAP family. In terms of assembly, binds to caspase-9. Interaction with DIABLO/SMAC via the BIR domain disrupts binding to caspase-9 and apoptotic suppressor activity. Interacts with TAB1. In vitro, interacts with caspase-3 and caspase-7 via its BIR domain. Post-translationally, autoubiquitinated and undergoes proteasome-mediated degradation. The truncated protein (tLivin) not only loses its anti-apoptotic effect but also acquires a pro-apoptotic effect.

Its subcellular location is the nucleus. It is found in the cytoplasm. The protein localises to the golgi apparatus. The enzyme catalyses S-ubiquitinyl-[E2 ubiquitin-conjugating enzyme]-L-cysteine + [acceptor protein]-L-lysine = [E2 ubiquitin-conjugating enzyme]-L-cysteine + N(6)-ubiquitinyl-[acceptor protein]-L-lysine.. Apoptotic regulator capable of exerting proapoptotic and anti-apoptotic activities and plays crucial roles in apoptosis, cell proliferation, and cell cycle control. Its anti-apoptotic activity is mediated through the inhibition of CASP3, CASP7 and CASP9, as well as by its E3 ubiquitin-protein ligase activity. As it is a weak caspase inhibitor, its anti-apoptotic activity is thought to be due to its ability to ubiquitinate DIABLO/SMAC targeting it for degradation thereby promoting cell survival. May contribute to caspase inhibition, by blocking the ability of DIABLO/SMAC to disrupt XIAP/BIRC4-caspase interactions. Protects against apoptosis induced by TNF or by chemical agents such as adriamycin, etoposide or staurosporine. Suppression of apoptosis is mediated by activation of MAPK8/JNK1, and possibly also of MAPK9/JNK2. This activation depends on TAB1 and MAP3K7/TAK1. In vitro, inhibits CASP3 and proteolytic activation of pro-CASP9. The chain is Baculoviral IAP repeat-containing protein 7 (Birc7) from Mus musculus (Mouse).